The primary structure comprises 50 residues: Basic phospholipase A2 Bmaj-9 (50 aa).

Ca(2+)-binding residues include Tyr27, Gly29, and Gly31. A disulfide bridge links Cys28 with Cys45. His48 is an active-site residue. A Ca(2+)-binding site is contributed by Asp49.

This sequence belongs to the phospholipase A2 family. Group II subfamily. D49 sub-subfamily. The cofactor is Ca(2+). Expressed by the venom gland.

It is found in the secreted. The catalysed reaction is a 1,2-diacyl-sn-glycero-3-phosphocholine + H2O = a 1-acyl-sn-glycero-3-phosphocholine + a fatty acid + H(+). Its function is as follows. Snake venom phospholipase A2 (PLA2) that causes irreversible neuromuscular blockade in chick biventer cervicis muscle preparations. The neuromuscular blockade is mediated by inhibitory action at the presynaptic motor nerve endings. PLA2 catalyzes the calcium-dependent hydrolysis of the 2-acyl groups in 3-sn-phosphoglycerides. In Bothrops marajoensis (Marajo lancehead), this protein is Basic phospholipase A2 Bmaj-9.